The chain runs to 403 residues: MSKLNVNKVVVAYSGGLDTSVIIPWLKENYDCEVVAFVADVGQGEEELVGIEEKAKASGASECYVVDLKEELVADYIYPTLKTGAYYEGKYLLGTSMARPVIAKAQVEIARKVGADALCHGCTGKGNDQVRFEGAFAALAPDLKVIAPWREWDLVSREQCLDYLAERNIPCAASLTKIYSRDANAWHISTEGGVLESTWNAPNEDCWVWTVDPEQAPNEAEYVTLQVEKGEVVAVDGEQMTPYNALVYLNEKGAKHGVGRIDIVENRLVGMKSRGCYETPGGTIMMEALRAVEQLVLDKTSFEFREELGLKASHLVYDGRWFTPLRKSIMAAADELAQDVNGEVVVKLYKGMATVTQKRSENSLYSEAFATFGEDEVYDQSHAGGFIRLYSLSSRIRALNSQK.

ATP is bound by residues 12–20 and Ala39; that span reads AYSGGLDTS. L-citrulline-binding residues include Tyr91 and Ser96. An ATP-binding site is contributed by Gly121. The L-aspartate site is built by Thr123, Asn127, and Asp128. Asn127 lines the L-citrulline pocket. The L-citrulline site is built by Arg131, Ser180, Ser189, Glu265, and Tyr277.

Belongs to the argininosuccinate synthase family. Type 1 subfamily. As to quaternary structure, homotetramer.

The protein localises to the cytoplasm. The catalysed reaction is L-citrulline + L-aspartate + ATP = 2-(N(omega)-L-arginino)succinate + AMP + diphosphate + H(+). The protein operates within amino-acid biosynthesis; L-arginine biosynthesis; L-arginine from L-ornithine and carbamoyl phosphate: step 2/3. This Vibrio vulnificus (strain CMCP6) protein is Argininosuccinate synthase.